The sequence spans 252 residues: Chitooligosaccharide deacetylase (252 aa).

Mg(2+) is bound by residues His61 and His125.

The protein belongs to the YdjC deacetylase family. ChbG subfamily. In terms of assembly, homodimer. It depends on Mg(2+) as a cofactor.

Its subcellular location is the cytoplasm. It carries out the reaction N,N'-diacetylchitobiose + H2O = N-acetyl-beta-D-glucosaminyl-(1-&gt;4)-D-glucosamine + acetate. The catalysed reaction is diacetylchitobiose-6'-phosphate + H2O = N'-monoacetylchitobiose-6'-phosphate + acetate. Its pathway is glycan degradation; chitin degradation. Functionally, involved in the degradation of chitin. ChbG is essential for growth on the acetylated chitooligosaccharides chitobiose and chitotriose but is dispensable for growth on cellobiose and chitosan dimer, the deacetylated form of chitobiose. Deacetylation of chitobiose-6-P and chitotriose-6-P is necessary for both the activation of the chb promoter by the regulatory protein ChbR and the hydrolysis of phosphorylated beta-glucosides by the phospho-beta-glucosidase ChbF. Catalyzes the removal of only one acetyl group from chitobiose-6-P to yield monoacetylchitobiose-6-P, the inducer of ChbR and the substrate of ChbF. The chain is Chitooligosaccharide deacetylase from Escherichia coli O6:K15:H31 (strain 536 / UPEC).